An 82-amino-acid polypeptide reads, in one-letter code: Small ribosomal subunit protein bS20 (82 aa).

A disordered region spans residues 1–29 (MPNIKSAKKDLRRSRAAAVRNRAQRSALR). The segment covering 16–29 (AAAVRNRAQRSALR) has biased composition (low complexity).

This sequence belongs to the bacterial ribosomal protein bS20 family.

Functionally, binds directly to 16S ribosomal RNA. The chain is Small ribosomal subunit protein bS20 from Gemmatimonas aurantiaca (strain DSM 14586 / JCM 11422 / NBRC 100505 / T-27).